Consider the following 265-residue polypeptide: Thiazole synthase (265 aa).

Lys106 functions as the Schiff-base intermediate with DXP in the catalytic mechanism. 1-deoxy-D-xylulose 5-phosphate-binding positions include Gly167, 193-194 (AG), and 215-216 (NS).

The protein belongs to the ThiG family. Homotetramer. Forms heterodimers with either ThiH or ThiS.

It localises to the cytoplasm. It catalyses the reaction [ThiS sulfur-carrier protein]-C-terminal-Gly-aminoethanethioate + 2-iminoacetate + 1-deoxy-D-xylulose 5-phosphate = [ThiS sulfur-carrier protein]-C-terminal Gly-Gly + 2-[(2R,5Z)-2-carboxy-4-methylthiazol-5(2H)-ylidene]ethyl phosphate + 2 H2O + H(+). The protein operates within cofactor biosynthesis; thiamine diphosphate biosynthesis. Functionally, catalyzes the rearrangement of 1-deoxy-D-xylulose 5-phosphate (DXP) to produce the thiazole phosphate moiety of thiamine. Sulfur is provided by the thiocarboxylate moiety of the carrier protein ThiS. In vitro, sulfur can be provided by H(2)S. The polypeptide is Thiazole synthase (Prochlorococcus marinus (strain MIT 9515)).